Consider the following 309-residue polypeptide: Taste receptor type 2 member 31 (309 aa).

Topologically, residues 1 to 2 (MT) are extracellular. The chain crosses the membrane as a helical span at residues 3-23 (TFIPIIFSSLVMVMFVTGNFA). Residues 24-55 (NGFIALVNSIESVKRQKISYADQILTALAVSR) lie on the Cytoplasmic side of the membrane. The helical transmembrane segment at 56-76 (IGLLWVLLLNWYSTVLNPAFY) threads the bilayer. Topologically, residues 77–100 (SVEVRTTAYNVWAVTGHFSNWLAT) are extracellular. The chain crosses the membrane as a helical span at residues 101 to 121 (SLSIFYLLKIANFSNLIFLHL). At 122-126 (KRRVK) the chain is on the cytoplasmic side. The chain crosses the membrane as a helical span at residues 127–147 (SVILVMLLGPLLFLACQLFVI). The Extracellular segment spans residues 148-181 (NMKEIVQTKEYEGNXTWKIKLRSAVYLSDATVTT). Residue N161 is glycosylated (N-linked (GlcNAc...) asparagine). The chain crosses the membrane as a helical span at residues 182 to 202 (LGNLVPFTLTLLCFLLLICSL). Residues 203 to 229 (CKHLKKMQLHGKGSQDPSMKVHIKALQ) lie on the Cytoplasmic side of the membrane. Residues 230–250 (TVTSFLLLCAIYFLSIMISVW) form a helical membrane-spanning segment. The Extracellular segment spans residues 251–259 (SLGSLKNKP). Residues 260–280 (VFMFCKAMRFSYPSIHPFILI) form a helical membrane-spanning segment. Residues 281–309 (WGNKKLKQTFLSVLQQVRYWVKGEKPSSP) lie on the Cytoplasmic side of the membrane.

Belongs to the G-protein coupled receptor T2R family.

It is found in the membrane. In terms of biological role, receptor that may play a role in the perception of bitterness and is gustducin-linked. May play a role in sensing the chemical composition of the gastrointestinal content. The activity of this receptor may stimulate alpha gustducin, mediate PLC-beta-2 activation and lead to the gating of TRPM5. The chain is Taste receptor type 2 member 31 (TAS2R31) from Gorilla gorilla gorilla (Western lowland gorilla).